The primary structure comprises 564 residues: Forkhead transcription factor HCM1 (564 aa).

Residues 33 to 80 (DEKEMITPPSSTVRKTMKEVNKRPSHPLSPDHSSPIAPSKAKRQRSDT) form a disordered region. Residues 58-67 (HPLSPDHSSP) show a composition bias toward low complexity. Positions 108–199 (KKPPYSYATL…KFFKGENRGY (92 aa)) form a DNA-binding region, fork-head. Acidic residues predominate over residues 224–241 (QVESGEGNDDLPDEEERE). Positions 224–246 (QVESGEGNDDLPDEEEREEAGKF) are disordered. The residue at position 342 (threonine 342) is a Phosphothreonine. The disordered stretch occupies residues 401 to 448 (SKPQSQQSYSNSQLPPPPSSHGSDLLKTPKMRHSDGLEKTPSRLISTP). A compositionally biased stretch (polar residues) spans 402–413 (KPQSQQSYSNSQ). The segment covering 432 to 441 (RHSDGLEKTP) has biased composition (basic and acidic residues). The residue at position 496 (serine 496) is a Phosphoserine. A disordered region spans residues 536–564 (SDGNNTTDSNQKHHPYHNHPSNDSGNEKN). Positions 554-564 (HPSNDSGNEKN) are enriched in polar residues.

In terms of processing, phosphorylated by CDK1.

The protein resides in the cytoplasm. It is found in the nucleus. In terms of biological role, transcription factor regulating the cell cycle specific transcription of a spindle pole body (SPB) calmodulin binding protein SPC110. Required for full induction of SPC110 transcription in late G1. Binds to DNA consensus sequence 5'-[AT]AA[TC]AAACAA[AT]-3'. Dosage dependent suppressor of calmodulin mutants which have specific defects in SPB assembly. The sequence is that of Forkhead transcription factor HCM1 (HCM1) from Saccharomyces cerevisiae (strain ATCC 204508 / S288c) (Baker's yeast).